A 596-amino-acid polypeptide reads, in one-letter code: tRNA(Met) cytidine acetyltransferase TmcA (596 aa).

Residues Q138, G160–K169, and R285 contribute to the ATP site. The N-acetyltransferase domain maps to S328–Y481. Residues I406–V408 and Q413–K419 each bind acetyl-CoA.

Belongs to the RNA cytidine acetyltransferase family. TmcA subfamily.

The protein resides in the cytoplasm. The enzyme catalyses cytidine(34) in elongator tRNA(Met) + acetyl-CoA + ATP + H2O = N(4)-acetylcytidine(34) in elongator tRNA(Met) + ADP + phosphate + CoA + H(+). In terms of biological role, catalyzes the formation of N(4)-acetylcytidine (ac(4)C) at the wobble position of tRNA(Met), by using acetyl-CoA as an acetyl donor and ATP (or GTP). This Actinobacillus pleuropneumoniae serotype 5b (strain L20) protein is tRNA(Met) cytidine acetyltransferase TmcA.